Consider the following 226-residue polypeptide: Small ribosomal subunit protein uS3 (226 aa).

The 69-residue stretch at 39–107 (IRAYIKKNVV…EVTLNIKEVK (69 aa)) folds into the KH type-2 domain.

Belongs to the universal ribosomal protein uS3 family. In terms of assembly, part of the 30S ribosomal subunit. Forms a tight complex with proteins S10 and S14.

Binds the lower part of the 30S subunit head. Binds mRNA in the 70S ribosome, positioning it for translation. The chain is Small ribosomal subunit protein uS3 from Pelagibacter ubique (strain HTCC1062).